The primary structure comprises 526 residues: Maturase K (526 aa).

The protein belongs to the intron maturase 2 family. MatK subfamily.

The protein resides in the plastid. It localises to the chloroplast. Functionally, usually encoded in the trnK tRNA gene intron. Probably assists in splicing its own and other chloroplast group II introns. This is Maturase K from Iris setosa (Hiougi-ayame).